The chain runs to 293 residues: Acetyl-coenzyme A carboxylase carboxyl transferase subunit beta (293 aa).

The region spanning 29–293 is the CoA carboxyltransferase N-terminal domain; it reads LWSKCPECGL…GCRPMEITSA (265 aa). 4 residues coordinate Zn(2+): Cys33, Cys36, Cys52, and Cys55. Residues 33 to 55 form a C4-type zinc finger; it reads CPECGLVVYVKDLKGNASVCAGC.

This sequence belongs to the AccD/PCCB family. As to quaternary structure, acetyl-CoA carboxylase is a heterohexamer composed of biotin carboxyl carrier protein (AccB), biotin carboxylase (AccC) and two subunits each of ACCase subunit alpha (AccA) and ACCase subunit beta (AccD). Zn(2+) serves as cofactor.

It localises to the cytoplasm. It catalyses the reaction N(6)-carboxybiotinyl-L-lysyl-[protein] + acetyl-CoA = N(6)-biotinyl-L-lysyl-[protein] + malonyl-CoA. It functions in the pathway lipid metabolism; malonyl-CoA biosynthesis; malonyl-CoA from acetyl-CoA: step 1/1. Its function is as follows. Component of the acetyl coenzyme A carboxylase (ACC) complex. Biotin carboxylase (BC) catalyzes the carboxylation of biotin on its carrier protein (BCCP) and then the CO(2) group is transferred by the transcarboxylase to acetyl-CoA to form malonyl-CoA. In Parasynechococcus marenigrum (strain WH8102), this protein is Acetyl-coenzyme A carboxylase carboxyl transferase subunit beta.